A 366-amino-acid polypeptide reads, in one-letter code: Cell division protein FtsZ 1 (366 aa).

GTP is bound by residues 45–49, 132–134, E163, R167, and D210; these read GAGCN and GTG. The segment covering 344-354 has biased composition (acidic residues); sequence PEEETPLETPE. Positions 344 to 366 are disordered; that stretch reads PEEETPLETPEESPSIEISIPEL. The segment covering 355–366 has biased composition (low complexity); the sequence is ESPSIEISIPEL.

The protein belongs to the FtsZ family. In terms of assembly, homodimer. Polymerizes to form a dynamic ring structure in a strictly GTP-dependent manner. Interacts directly with several other division proteins.

The protein resides in the cytoplasm. In terms of biological role, essential cell division protein that forms a contractile ring structure (Z ring) at the future cell division site. The regulation of the ring assembly controls the timing and the location of cell division. One of the functions of the FtsZ ring is to recruit other cell division proteins to the septum to produce a new cell wall between the dividing cells. Binds GTP and shows GTPase activity. This Pyrococcus woesei protein is Cell division protein FtsZ 1.